The chain runs to 416 residues: Phosphoglycerate kinase (416 aa).

The (2R)-3-phosphoglycerate site is built by Val-23, Asp-24, Phe-25, Asn-26, Gln-39, Arg-40, Ser-63, His-64, Gly-66, Arg-67, Leu-122, Arg-123, His-170, and Arg-171. Gly-214 serves as a coordination point for ADP. Gly-214 serves as a coordination point for CDP. Residues Ala-215 and Lys-216 each coordinate AMP. Residue Ala-215 coordinates ATP. Residue Ala-215 participates in Mg(2+) binding. Asp-219 contacts CDP. Asp-219 lines the Mg(2+) pocket. AMP is bound at residue Lys-220. Lys-220 lines the ATP pocket. Gly-238 serves as a coordination point for ADP. Gly-238 contributes to the CDP binding site. Gly-239 and Gly-312 together coordinate AMP. The ATP site is built by Gly-239 and Gly-312. Positions 337, 339, and 342 each coordinate CDP. Phe-342 is a binding site for ADP. Glu-343 provides a ligand contact to AMP. ATP contacts are provided by Glu-343, Asp-374, and Thr-375. Asp-374 provides a ligand contact to Mg(2+).

This sequence belongs to the phosphoglycerate kinase family. Monomer. It depends on Mg(2+) as a cofactor.

The protein localises to the cytoplasm. It localises to the mitochondrion. The enzyme catalyses (2R)-3-phosphoglycerate + ATP = (2R)-3-phospho-glyceroyl phosphate + ADP. It participates in carbohydrate degradation; glycolysis; pyruvate from D-glyceraldehyde 3-phosphate: step 2/5. Catalyzes one of the two ATP producing reactions in the glycolytic pathway via the reversible conversion of 1,3-diphosphoglycerate to 3-phosphoglycerate. Both L- and D- forms of purine and pyrimidine nucleotides can be used as substrates, but the activity is much lower on pyrimidines. Negatively regulates the biosynthesis of acetyl-CoA from pyruvate in the mitochondrion. The polypeptide is Phosphoglycerate kinase (pgk1) (Hypocrea jecorina (Trichoderma reesei)).